A 401-amino-acid chain; its full sequence is Glutamyl-tRNA reductase (401 aa).

Residues 45–48 (TCNR), S101, 106–108 (EDQ), and Q112 each bind substrate. Catalysis depends on C46, which acts as the Nucleophile. Position 177–182 (177–182 (GYGDVG)) interacts with NADP(+).

It belongs to the glutamyl-tRNA reductase family. In terms of assembly, homodimer.

It carries out the reaction (S)-4-amino-5-oxopentanoate + tRNA(Glu) + NADP(+) = L-glutamyl-tRNA(Glu) + NADPH + H(+). It functions in the pathway porphyrin-containing compound metabolism; protoporphyrin-IX biosynthesis; 5-aminolevulinate from L-glutamyl-tRNA(Glu): step 1/2. Catalyzes the NADPH-dependent reduction of glutamyl-tRNA(Glu) to glutamate 1-semialdehyde (GSA). The polypeptide is Glutamyl-tRNA reductase (Clostridium botulinum (strain Alaska E43 / Type E3)).